A 386-amino-acid chain; its full sequence is Glycerate dehydrogenase HPR, peroxisomal (386 aa).

NAD(+) is bound by residues 175–176, 271–273, and Asp-297; these read RI and CSR. Arg-273 is an active-site residue. Glu-302 is an active-site residue. The active-site Proton donor is His-320. Residue 320 to 323 participates in NAD(+) binding; sequence HIAS. The Microbody targeting signal motif lies at 384 to 386; the sequence is SKL.

Belongs to the D-isomer specific 2-hydroxyacid dehydrogenase family. As to expression, present in leaves (at protein level). Mostly expressed in photosynthetic tissues such as leaves, stems, flowers, buds, and, to a lower extent, in siliques and roots.

The protein localises to the peroxisome. It carries out the reaction (R)-glycerate + NAD(+) = 3-hydroxypyruvate + NADH + H(+). The protein operates within photosynthesis; photorespiration; 3-phospho-D-glycerate from glycine: step 3/4. Slightly inhibited by oxalate. Its function is as follows. Catalyzes the NADH-dependent reduction of hydroxypyruvate into glycerate in the photorespiratory core cycle. Mediates fatty acid beta-oxidation in germinating seeds when malate dehydrogenase is absent. The protein is Glycerate dehydrogenase HPR, peroxisomal (HPR) of Arabidopsis thaliana (Mouse-ear cress).